The chain runs to 165 residues: Shikimate kinase (165 aa).

ATP is bound at residue 11–16 (GAGKTT). Thr15 contacts Mg(2+). Residues Asp33, Arg57, and Gly78 each contribute to the substrate site. Residue Arg116 coordinates ATP. Arg134 is a substrate binding site.

It belongs to the shikimate kinase family. In terms of assembly, monomer. Requires Mg(2+) as cofactor.

The protein resides in the cytoplasm. It carries out the reaction shikimate + ATP = 3-phosphoshikimate + ADP + H(+). It participates in metabolic intermediate biosynthesis; chorismate biosynthesis; chorismate from D-erythrose 4-phosphate and phosphoenolpyruvate: step 5/7. Functionally, catalyzes the specific phosphorylation of the 3-hydroxyl group of shikimic acid using ATP as a cosubstrate. This chain is Shikimate kinase, found in Bacillus cereus (strain G9842).